The following is a 316-amino-acid chain: N-acetyl-gamma-glutamyl-phosphate reductase (316 aa).

Residue Cys-136 is part of the active site.

It belongs to the NAGSA dehydrogenase family. Type 1 subfamily.

It localises to the cytoplasm. It catalyses the reaction N-acetyl-L-glutamate 5-semialdehyde + phosphate + NADP(+) = N-acetyl-L-glutamyl 5-phosphate + NADPH + H(+). It functions in the pathway amino-acid biosynthesis; L-arginine biosynthesis; N(2)-acetyl-L-ornithine from L-glutamate: step 3/4. Functionally, catalyzes the NADPH-dependent reduction of N-acetyl-5-glutamyl phosphate to yield N-acetyl-L-glutamate 5-semialdehyde. The sequence is that of N-acetyl-gamma-glutamyl-phosphate reductase from Xanthomonas campestris pv. campestris (strain ATCC 33913 / DSM 3586 / NCPPB 528 / LMG 568 / P 25).